A 344-amino-acid polypeptide reads, in one-letter code: Golgi-associated RAB2 interactor protein 1B (344 aa).

Residues 271 to 293 (FRSSRKVETNKNSSGKDSSREDS) are disordered.

This sequence belongs to the GARIN family.

It is found in the golgi apparatus. Functionally, RAB2B effector protein required for accurate acrosome formation and normal male fertility. In complex with RAB2A/RAB2B, seems to suppress excessive vesicle trafficking during acrosome formation. The chain is Golgi-associated RAB2 interactor protein 1B from Homo sapiens (Human).